The sequence spans 72 residues: MAKEEPIEVEGRVIEPLPNAMFRVELENGHRVLAHISGKMRMHFIKILPGDKVTVELSPYDLTRGRIIYRTK.

The S1-like domain maps to 1–72; that stretch reads MAKEEPIEVE…TRGRIIYRTK (72 aa).

The protein belongs to the IF-1 family. In terms of assembly, component of the 30S ribosomal translation pre-initiation complex which assembles on the 30S ribosome in the order IF-2 and IF-3, IF-1 and N-formylmethionyl-tRNA(fMet); mRNA recruitment can occur at any time during PIC assembly.

It localises to the cytoplasm. In terms of biological role, one of the essential components for the initiation of protein synthesis. Stabilizes the binding of IF-2 and IF-3 on the 30S subunit to which N-formylmethionyl-tRNA(fMet) subsequently binds. Helps modulate mRNA selection, yielding the 30S pre-initiation complex (PIC). Upon addition of the 50S ribosomal subunit IF-1, IF-2 and IF-3 are released leaving the mature 70S translation initiation complex. This is Translation initiation factor IF-1 from Syntrophus aciditrophicus (strain SB).